A 319-amino-acid polypeptide reads, in one-letter code: Beta-ketoacyl-[acyl-carrier-protein] synthase III (319 aa).

Residues C113 and H246 contribute to the active site. The ACP-binding stretch occupies residues 247–251 (QANRR). N276 is a catalytic residue.

The protein belongs to the thiolase-like superfamily. FabH family. In terms of assembly, homodimer.

It is found in the cytoplasm. The enzyme catalyses malonyl-[ACP] + acetyl-CoA + H(+) = 3-oxobutanoyl-[ACP] + CO2 + CoA. Its pathway is lipid metabolism; fatty acid biosynthesis. Its function is as follows. Catalyzes the condensation reaction of fatty acid synthesis by the addition to an acyl acceptor of two carbons from malonyl-ACP. Catalyzes the first condensation reaction which initiates fatty acid synthesis and may therefore play a role in governing the total rate of fatty acid production. Possesses both acetoacetyl-ACP synthase and acetyl transacylase activities. Its substrate specificity determines the biosynthesis of branched-chain and/or straight-chain of fatty acids. This chain is Beta-ketoacyl-[acyl-carrier-protein] synthase III, found in Rhizorhabdus wittichii (strain DSM 6014 / CCUG 31198 / JCM 15750 / NBRC 105917 / EY 4224 / RW1) (Sphingomonas wittichii).